The sequence spans 326 residues: Acetyl-coenzyme A carboxylase carboxyl transferase subunit alpha (326 aa).

Residues 46 to 300 enclose the CoA carboxyltransferase C-terminal domain; that stretch reads EIEARAAELR…KEALLRHLDE (255 aa).

This sequence belongs to the AccA family. In terms of assembly, acetyl-CoA carboxylase is a heterohexamer composed of biotin carboxyl carrier protein (AccB), biotin carboxylase (AccC) and two subunits each of ACCase subunit alpha (AccA) and ACCase subunit beta (AccD).

It is found in the cytoplasm. The catalysed reaction is N(6)-carboxybiotinyl-L-lysyl-[protein] + acetyl-CoA = N(6)-biotinyl-L-lysyl-[protein] + malonyl-CoA. It functions in the pathway lipid metabolism; malonyl-CoA biosynthesis; malonyl-CoA from acetyl-CoA: step 1/1. In terms of biological role, component of the acetyl coenzyme A carboxylase (ACC) complex. First, biotin carboxylase catalyzes the carboxylation of biotin on its carrier protein (BCCP) and then the CO(2) group is transferred by the carboxyltransferase to acetyl-CoA to form malonyl-CoA. This is Acetyl-coenzyme A carboxylase carboxyl transferase subunit alpha from Gloeobacter violaceus (strain ATCC 29082 / PCC 7421).